The following is a 185-amino-acid chain: MINDIKKDAQERMGKSIEALSRNLAAIRTGRAHPSILDSVKVTAWGSEMPLNQVAAITVEDARTLKIVAHDKNLSAAIEKAILTSDLGLNPSSAGTTIRVPMPALTEETRKGYTKQASGVAEDAKVAVRNVRRDALADLKKLTKDKEISEDEERRAADEIQKLTDKFVAEVDAAFKAKEKDLMAV.

It belongs to the RRF family.

Its subcellular location is the cytoplasm. Responsible for the release of ribosomes from messenger RNA at the termination of protein biosynthesis. May increase the efficiency of translation by recycling ribosomes from one round of translation to another. In Pseudomonas putida (strain ATCC 700007 / DSM 6899 / JCM 31910 / BCRC 17059 / LMG 24140 / F1), this protein is Ribosome-recycling factor.